We begin with the raw amino-acid sequence, 103 residues long: Histone H4 (103 aa).

Over residues Met1 to Gly14 the composition is skewed to gly residues. The tract at residues Met1 to Arg20 is disordered. The DNA-binding element occupies Lys17–Lys21.

The protein belongs to the histone H4 family. The nucleosome is a histone octamer containing two molecules each of H2A, H2B, H3 and H4 assembled in one H3-H4 heterotetramer and two H2A-H2B heterodimers. The octamer wraps approximately 147 bp of DNA.

The protein localises to the nucleus. Its subcellular location is the chromosome. Functionally, core component of nucleosome. Nucleosomes wrap and compact DNA into chromatin, limiting DNA accessibility to the cellular machineries which require DNA as a template. Histones thereby play a central role in transcription regulation, DNA repair, DNA replication and chromosomal stability. DNA accessibility is regulated via a complex set of post-translational modifications of histones, also called histone code, and nucleosome remodeling. This Chlamydomonas reinhardtii (Chlamydomonas smithii) protein is Histone H4 (H4-I).